The primary structure comprises 154 residues: Cyclin-dependent protein kinase inhibitor SMR11 (154 aa).

The tract at residues 1-44 (MEQEEPCEAKETASSSIEPKTPNPNVPDSIPAIDSDSSLSEEEI) is disordered. The span at 27-38 (PDSIPAIDSDSS) shows a compositional bias: low complexity.

In terms of assembly, interacts with CYCB2-4.

Its function is as follows. Probable cyclin-dependent protein kinase (CDK) inhibitor that functions as a repressor of mitosis in the endoreduplication cell cycle. This Arabidopsis thaliana (Mouse-ear cress) protein is Cyclin-dependent protein kinase inhibitor SMR11.